Reading from the N-terminus, the 104-residue chain is L-rhamnose mutarotase (104 aa).

Tyrosine 18 provides a ligand contact to substrate. Catalysis depends on histidine 22, which acts as the Proton donor. Substrate is bound by residues tyrosine 41 and 76 to 77 (WW).

The protein belongs to the rhamnose mutarotase family. In terms of assembly, homodimer.

The protein localises to the cytoplasm. It catalyses the reaction alpha-L-rhamnose = beta-L-rhamnose. It functions in the pathway carbohydrate metabolism; L-rhamnose metabolism. Involved in the anomeric conversion of L-rhamnose. In Klebsiella pneumoniae subsp. pneumoniae (strain ATCC 700721 / MGH 78578), this protein is L-rhamnose mutarotase.